A 366-amino-acid chain; its full sequence is Alanine racemase (366 aa).

The active-site Proton acceptor; specific for D-alanine is the Lys-40. Residue Lys-40 is modified to N6-(pyridoxal phosphate)lysine. Position 136 (Arg-136) interacts with substrate. The active-site Proton acceptor; specific for L-alanine is Tyr-263. Met-310 is a binding site for substrate.

The protein belongs to the alanine racemase family. It depends on pyridoxal 5'-phosphate as a cofactor.

The catalysed reaction is L-alanine = D-alanine. It participates in amino-acid biosynthesis; D-alanine biosynthesis; D-alanine from L-alanine: step 1/1. In terms of biological role, catalyzes the interconversion of L-alanine and D-alanine. May also act on other amino acids. The polypeptide is Alanine racemase (alr) (Streptococcus agalactiae serotype Ia (strain ATCC 27591 / A909 / CDC SS700)).